The following is a 169-amino-acid chain: Cell division inhibitor SulA (169 aa).

Residues 106–112 (ALRTGNY) form a ftsZ binding region. Residues 162–169 (KIHSNLYH) are lon protease binding.

It belongs to the SulA family. As to quaternary structure, interacts with FtsZ. Post-translationally, is rapidly cleaved and degraded by the Lon protease once DNA damage is repaired.

Functionally, component of the SOS system and an inhibitor of cell division. Accumulation of SulA causes rapid cessation of cell division and the appearance of long, non-septate filaments. In the presence of GTP, binds a polymerization-competent form of FtsZ in a 1:1 ratio, thus inhibiting FtsZ polymerization and therefore preventing it from participating in the assembly of the Z ring. This mechanism prevents the premature segregation of damaged DNA to daughter cells during cell division. The polypeptide is Cell division inhibitor SulA (Salmonella gallinarum (strain 287/91 / NCTC 13346)).